A 173-amino-acid polypeptide reads, in one-letter code: Protein FAM180A (173 aa).

An N-terminal signal peptide occupies residues 1–17 (MHWKMLLLLLLYYNAEA).

The protein belongs to the FAM180 family.

It localises to the secreted. In Homo sapiens (Human), this protein is Protein FAM180A (FAM180A).